The sequence spans 246 residues: Ribonuclease PH (246 aa).

Residues Arg91 and 129 to 131 (GTR) each bind phosphate.

It belongs to the RNase PH family. In terms of assembly, homohexameric ring arranged as a trimer of dimers.

It catalyses the reaction tRNA(n+1) + phosphate = tRNA(n) + a ribonucleoside 5'-diphosphate. Functionally, phosphorolytic 3'-5' exoribonuclease that plays an important role in tRNA 3'-end maturation. Removes nucleotide residues following the 3'-CCA terminus of tRNAs; can also add nucleotides to the ends of RNA molecules by using nucleoside diphosphates as substrates, but this may not be physiologically important. Probably plays a role in initiation of 16S rRNA degradation (leading to ribosome degradation) during starvation. The polypeptide is Ribonuclease PH (Burkholderia ambifaria (strain MC40-6)).